Consider the following 1220-residue polypeptide: Cullin-associated NEDD8-dissociated protein 1 (1220 aa).

12 HEAT repeats span residues 1-35 (MEEG…DANH), 42-79 (ESFP…KIPQ), 121-157 (FYTS…SLEI), 259-295 (ADYT…YQQV), 365-410 (LSRL…HVPR), 615-650 (IFLR…SVTD), 680-700 (TTAY…YLAE), 701-737 (SLLE…SILL), 738-775 (KSKN…VISK), 810-847 (FQSK…DYGK), 850-887 (LPAN…QSEK), and 1020-1057 (EVSQ…KSSV).

Belongs to the CAND family.

The protein resides in the nucleus. In terms of biological role, key assembly factor of SCF (SKP1-CUL1-F-box protein) E3 ubiquitin ligase complexes that promotes the exchange of the substrate-recognition F-box subunit in SCF complexes, thereby playing a key role in the cellular repertoire of SCF complexes. Acts as a F-box protein exchange factor. In Schizosaccharomyces pombe (strain 972 / ATCC 24843) (Fission yeast), this protein is Cullin-associated NEDD8-dissociated protein 1 (knd1).